Here is a 500-residue protein sequence, read N- to C-terminus: Cysteine--tRNA ligase (500 aa).

Cys-29 is a binding site for Zn(2+). The short motif at 31–41 (VTVYDLCHLGH) is the 'HIGH' region element. Positions 213, 238, and 242 each coordinate Zn(2+). The short motif at 270–274 (KMSKS) is the 'KMSKS' region element. Position 273 (Lys-273) interacts with ATP.

Belongs to the class-I aminoacyl-tRNA synthetase family. As to quaternary structure, monomer. Zn(2+) is required as a cofactor.

The protein localises to the cytoplasm. It catalyses the reaction tRNA(Cys) + L-cysteine + ATP = L-cysteinyl-tRNA(Cys) + AMP + diphosphate. The chain is Cysteine--tRNA ligase from Prochlorococcus marinus (strain NATL2A).